We begin with the raw amino-acid sequence, 1013 residues long: Mediator of RNA polymerase II transcription subunit 5 (1013 aa).

The protein belongs to the Mediator complex subunit 5 family. In terms of assembly, component of the Mediator complex.

The protein localises to the nucleus. In terms of biological role, component of the Mediator complex, a coactivator involved in the regulated transcription of nearly all RNA polymerase II-dependent genes. Mediator functions as a bridge to convey information from gene-specific regulatory proteins to the basal RNA polymerase II transcription machinery. Mediator is recruited to promoters by direct interactions with regulatory proteins and serves as a scaffold for the assembly of a functional preinitiation complex with RNA polymerase II and the general transcription factors. This Aspergillus oryzae (strain ATCC 42149 / RIB 40) (Yellow koji mold) protein is Mediator of RNA polymerase II transcription subunit 5 (NUT1).